Here is a 371-residue protein sequence, read N- to C-terminus: Partitioning defective 6 homolog beta (371 aa).

Phosphoserine occurs at positions 10 and 11. In terms of domain architecture, PB1 spans 16 to 96 (TMEVKSKFGA…PLLRIFIQKK (81 aa)). The interval 126–253 (RKKPHIVISM…ITVRPANQRN (128 aa)) is interaction with PARD3 and CDC42. Residues 133–150 (ISMPQDFRPVSSIIDVDI) form the Pseudo-CRIB domain. A PDZ domain is found at 157-250 (RVRLYKYGTE…NLIITVRPAN (94 aa)). Disordered stretches follow at residues 253–273 (NNVV…DNSL) and 326–371 (FESG…IITL). A compositionally biased stretch (polar residues) spans 326–340 (FESGQNGFSPPQDTS). Residues 352 to 363 (LESRAPDQKLLE) show a composition bias toward basic and acidic residues.

Belongs to the PAR6 family. As to quaternary structure, interacts with PARD3. Interacts with GTP-bound forms of CDC42, RHOQ/TC10 and RAC1. Interacts with the N-terminal part of PRKCI and PRKCZ. Part of a complex with PARD3, CDC42 or RAC1 and PRKCI or PRKCZ. Part of a complex with LLGL1 and PRKCI. Interacts with ALS2CR19. Interacts with ECT2. Interacts with PALS1. Expressed in pancreas and in both adult and fetal kidney. Weakly expressed in placenta and lung. Not expressed in other tissues.

The protein localises to the cytoplasm. It localises to the cell membrane. The protein resides in the cell junction. Its subcellular location is the tight junction. In terms of biological role, adapter protein involved in asymmetrical cell division and cell polarization processes. Probably involved in formation of epithelial tight junctions. Association with PARD3 may prevent the interaction of PARD3 with F11R/JAM1, thereby preventing tight junction assembly. The PARD6-PARD3 complex links GTP-bound Rho small GTPases to atypical protein kinase C proteins. This Mus musculus (Mouse) protein is Partitioning defective 6 homolog beta (Pard6b).